We begin with the raw amino-acid sequence, 260 residues long: Glutathione S-transferase domain-containing protein DDB_G0280881 (260 aa).

Residues 7–96 (KVDFIFYTNG…YLAQKYNTFL (90 aa)) form the GST N-terminal domain. Positions 102–228 (NPKENSDVIT…QQISEGFKNF (127 aa)) constitute a GST C-terminal domain.

Belongs to the GST superfamily.

This chain is Glutathione S-transferase domain-containing protein DDB_G0280881, found in Dictyostelium discoideum (Social amoeba).